Here is a 455-residue protein sequence, read N- to C-terminus: Bifunctional protein GlmU (455 aa).

Residues Met1–Arg226 form a pyrophosphorylase region. Residues Leu8–Gly11, Lys22, Gln73, Gly78–Thr79, Tyr99–Asp101, Gly136, Glu151, Asn166, and Asn224 each bind UDP-N-acetyl-alpha-D-glucosamine. A Mg(2+)-binding site is contributed by Asp101. Asn224 lines the Mg(2+) pocket. A linker region spans residues Thr227–Lys247. The segment at Gly248–Lys455 is N-acetyltransferase. The UDP-N-acetyl-alpha-D-glucosamine site is built by Arg330 and Lys348. His360 functions as the Proton acceptor in the catalytic mechanism. UDP-N-acetyl-alpha-D-glucosamine contacts are provided by Tyr363 and Asn374. Acetyl-CoA is bound by residues Ala377, Asn383–Tyr384, Ser402, Ala420, and Arg437.

It in the N-terminal section; belongs to the N-acetylglucosamine-1-phosphate uridyltransferase family. The protein in the C-terminal section; belongs to the transferase hexapeptide repeat family. In terms of assembly, homotrimer. The cofactor is Mg(2+).

It localises to the cytoplasm. The enzyme catalyses alpha-D-glucosamine 1-phosphate + acetyl-CoA = N-acetyl-alpha-D-glucosamine 1-phosphate + CoA + H(+). The catalysed reaction is N-acetyl-alpha-D-glucosamine 1-phosphate + UTP + H(+) = UDP-N-acetyl-alpha-D-glucosamine + diphosphate. It functions in the pathway nucleotide-sugar biosynthesis; UDP-N-acetyl-alpha-D-glucosamine biosynthesis; N-acetyl-alpha-D-glucosamine 1-phosphate from alpha-D-glucosamine 6-phosphate (route II): step 2/2. It participates in nucleotide-sugar biosynthesis; UDP-N-acetyl-alpha-D-glucosamine biosynthesis; UDP-N-acetyl-alpha-D-glucosamine from N-acetyl-alpha-D-glucosamine 1-phosphate: step 1/1. Its pathway is bacterial outer membrane biogenesis; LPS lipid A biosynthesis. Its function is as follows. Catalyzes the last two sequential reactions in the de novo biosynthetic pathway for UDP-N-acetylglucosamine (UDP-GlcNAc). The C-terminal domain catalyzes the transfer of acetyl group from acetyl coenzyme A to glucosamine-1-phosphate (GlcN-1-P) to produce N-acetylglucosamine-1-phosphate (GlcNAc-1-P), which is converted into UDP-GlcNAc by the transfer of uridine 5-monophosphate (from uridine 5-triphosphate), a reaction catalyzed by the N-terminal domain. The chain is Bifunctional protein GlmU from Francisella tularensis subsp. tularensis (strain FSC 198).